A 200-amino-acid polypeptide reads, in one-letter code: 3-isopropylmalate dehydratase small subunit (200 aa).

Belongs to the LeuD family. LeuD type 1 subfamily. Heterodimer of LeuC and LeuD.

The catalysed reaction is (2R,3S)-3-isopropylmalate = (2S)-2-isopropylmalate. The protein operates within amino-acid biosynthesis; L-leucine biosynthesis; L-leucine from 3-methyl-2-oxobutanoate: step 2/4. In terms of biological role, catalyzes the isomerization between 2-isopropylmalate and 3-isopropylmalate, via the formation of 2-isopropylmaleate. This is 3-isopropylmalate dehydratase small subunit from Campylobacter jejuni subsp. jejuni serotype O:6 (strain 81116 / NCTC 11828).